The chain runs to 742 residues: Cullin-2 (742 aa).

The Cullin neddylation domain maps to 672–734 (DRRYAIDAAL…RDYLERDTDN (63 aa)). Residue Lys-686 forms a Glycyl lysine isopeptide (Lys-Gly) (interchain with G-Cter in NEDD8) linkage.

It belongs to the cullin family. Interacts with SKIP17 and FBW2/SKIP18. Post-translationally, neddylated; which enhances the ubiquitination activity of E3 ubiquitin-protein ligase complexes.

Its function is as follows. Core component of multiple SCF (SKP1-CUL1-F-box protein) E3 ubiquitin-protein ligase complexes. Involved in ubiquitination and subsequent proteasomal degradation of target proteins. In Arabidopsis thaliana (Mouse-ear cress), this protein is Cullin-2 (CUL2).